The following is a 213-amino-acid chain: Urease accessory protein UreG (213 aa).

Gly14 to Thr21 is a GTP binding site.

This sequence belongs to the SIMIBI class G3E GTPase family. UreG subfamily. Homodimer. UreD, UreF and UreG form a complex that acts as a GTP-hydrolysis-dependent molecular chaperone, activating the urease apoprotein by helping to assemble the nickel containing metallocenter of UreC. The UreE protein probably delivers the nickel.

The protein resides in the cytoplasm. In terms of biological role, facilitates the functional incorporation of the urease nickel metallocenter. This process requires GTP hydrolysis, probably effectuated by UreG. This is Urease accessory protein UreG from Mesorhizobium japonicum (strain LMG 29417 / CECT 9101 / MAFF 303099) (Mesorhizobium loti (strain MAFF 303099)).